A 280-amino-acid chain; its full sequence is Nuclear egress protein 1 (280 aa).

Residues 86–203 form a CCCH-type zinc finger; the sequence is CLTLSPYGHS…YIIFTSLTLH (118 aa).

The protein belongs to the herpesviridae NEC1 protein family. Forms a heterohexameric complex with NEC2. Interacts with capsid vertex specific component 2/CVC2; this interaction directs the capsid to the host inner nuclear membrane to initiate budding. Phosphorylated at serine residues in the N-terminus. This phosphorylation regulates the localization within the inner nuclear membrane.

Its subcellular location is the host nucleus inner membrane. Its function is as follows. Plays an essential role in virion nuclear egress, the first step of virion release from infected cell. Within the host nucleus, NEC1 interacts with the newly formed capsid through the vertexes and directs it to the inner nuclear membrane by associating with NEC2. Induces the budding of the capsid at the inner nuclear membrane as well as its envelopment into the perinuclear space. There, the NEC1/NEC2 complex promotes the fusion of the enveloped capsid with the outer nuclear membrane and the subsequent release of the viral capsid into the cytoplasm where it will reach the secondary budding sites in the host Golgi or trans-Golgi network. The sequence is that of Nuclear egress protein 1 from Alcelaphine herpesvirus 1 (strain C500) (AlHV-1).